The primary structure comprises 122 residues: Toxin CSTX-1 (122 aa).

The first 20 residues, 1–20, serve as a signal peptide directing secretion; it reads MKVLIISAVLFITIFSNISA. Positions 21 to 47 are excised as a propeptide; sequence EIEDDFLEDESFEAEDIIPFFENEQAR. 4 disulfides stabilise this stretch: cysteine 49-cysteine 64, cysteine 56-cysteine 73, cysteine 63-cysteine 91, and cysteine 75-cysteine 89. A predicted alpha-helix region spans residues 99–112; that stretch reads AIETGLNIFRGLFK. Arginine 108 is subject to Arginine amide; in CSTX-2a. Residue lysine 121 is modified to Lysine amide; in omega-ctenitoxin-Cs1a.

The protein belongs to the neurotoxin 19 (CSTX) family. 04 (U1-Lctx) subfamily. In terms of assembly, monomer. Interacts with CSTX-13 (AC P83919) (Kd=430 nM), but does not interact with CSTX-9 (AC P58604). Expressed by the venom gland.

Its subcellular location is the secreted. The protein resides in the target cell membrane. Spider venom toxin that shows calcium channel blocking activity and exhibits cytolytic activity by affecting the outer leaflet curvature and/or pore formation across the membrane. It blocks L-type calcium channels (Cav1/CACNA1) in mammalian neurons at nanomolar concentrations. Furthermore, it produces a slow voltage-independent block of mid/low and high voltage-activated calcium channels in cockroach neurons. Potassium ions, histamine, M-ctenitoxin-Cs1a (AC P83619), CSTX-9 (AC P58604), and CSTX-13 (AC P83919) synergistically increase the insecticidal activity of this toxin. In vivo, it causes paralysis in blow flies and provokes death in drosophila. Its function is as follows. Blocks voltage-activated calcium channels (Cav). Does not induce cell membrane permeability increase when tested on Xenopus oocytes. No alpha-helical structures are detectable. Is 7-fold less neurotoxic than omega-ctenitoxin-Cs1a on drosophila flies. In terms of biological role, blocks voltage-activated calcium channels (Cav). Is 190-fold less neurotoxic than omega-ctenitoxin-Cs1a on drosophila flies. The chain is Toxin CSTX-1 from Cupiennius salei (American wandering spider).